Reading from the N-terminus, the 413-residue chain is Coiled-coil domain-containing protein 83 (413 aa).

Coiled-coil stretches lie at residues 32–186 (HCQI…RIIR) and 215–255 (IWEN…QLFN).

The sequence is that of Coiled-coil domain-containing protein 83 (CCDC83) from Bos taurus (Bovine).